A 143-amino-acid polypeptide reads, in one-letter code: Ribulose bisphosphate carboxylase large chain (143 aa).

Residues 1 to 2 constitute a propeptide that is removed on maturation; that stretch reads MS. Position 3 is an N-acetylproline (Pro-3). Position 14 is an N6,N6,N6-trimethyllysine (Lys-14). Xaa-123 is a binding site for substrate.

The protein belongs to the RuBisCO large chain family. Type I subfamily. Heterohexadecamer of 8 large chains and 8 small chains.

The protein localises to the plastid. Its subcellular location is the chloroplast. It carries out the reaction 2 (2R)-3-phosphoglycerate + 2 H(+) = D-ribulose 1,5-bisphosphate + CO2 + H2O. The catalysed reaction is D-ribulose 1,5-bisphosphate + O2 = 2-phosphoglycolate + (2R)-3-phosphoglycerate + 2 H(+). Its function is as follows. RuBisCO catalyzes two reactions: the carboxylation of D-ribulose 1,5-bisphosphate, the primary event in carbon dioxide fixation, as well as the oxidative fragmentation of the pentose substrate in the photorespiration process. Both reactions occur simultaneously and in competition at the same active site. In Nemopanthus mucronatus (Catberry), this protein is Ribulose bisphosphate carboxylase large chain (rbcL).